A 170-amino-acid polypeptide reads, in one-letter code: Probable chemoreceptor glutamine deamidase CheD (170 aa).

This sequence belongs to the CheD family.

It catalyses the reaction L-glutaminyl-[protein] + H2O = L-glutamyl-[protein] + NH4(+). Probably deamidates glutamine residues to glutamate on methyl-accepting chemotaxis receptors (MCPs), playing an important role in chemotaxis. In Maridesulfovibrio salexigens (strain ATCC 14822 / DSM 2638 / NCIMB 8403 / VKM B-1763) (Desulfovibrio salexigens), this protein is Probable chemoreceptor glutamine deamidase CheD.